The sequence spans 488 residues: Ribulose bisphosphate carboxylase large chain (488 aa).

Positions 128 and 178 each coordinate substrate. K180 serves as the catalytic Proton acceptor. A substrate-binding site is contributed by K182. Mg(2+)-binding residues include K206, D208, and E209. K206 is modified (N6-carboxylysine). The Proton acceptor role is filled by H298. The substrate site is built by R299, H331, and S383.

This sequence belongs to the RuBisCO large chain family. Type I subfamily. Heterohexadecamer of 8 large chains and 8 small chains. Requires Mg(2+) as cofactor.

It carries out the reaction 2 (2R)-3-phosphoglycerate + 2 H(+) = D-ribulose 1,5-bisphosphate + CO2 + H2O. The enzyme catalyses D-ribulose 1,5-bisphosphate + O2 = 2-phosphoglycolate + (2R)-3-phosphoglycerate + 2 H(+). Functionally, ruBisCO catalyzes two reactions: the carboxylation of D-ribulose 1,5-bisphosphate, the primary event in carbon dioxide fixation, as well as the oxidative fragmentation of the pentose substrate. Both reactions occur simultaneously and in competition at the same active site. This is Ribulose bisphosphate carboxylase large chain from Xanthobacter autotrophicus (strain ATCC BAA-1158 / Py2).